We begin with the raw amino-acid sequence, 141 residues long: Nucleoside diphosphate kinase (141 aa).

6 residues coordinate ATP: K11, F59, R87, T93, R104, and N114. The active-site Pros-phosphohistidine intermediate is H117.

Belongs to the NDK family. As to quaternary structure, homotetramer. Mg(2+) is required as a cofactor.

The protein resides in the cytoplasm. It catalyses the reaction a 2'-deoxyribonucleoside 5'-diphosphate + ATP = a 2'-deoxyribonucleoside 5'-triphosphate + ADP. The enzyme catalyses a ribonucleoside 5'-diphosphate + ATP = a ribonucleoside 5'-triphosphate + ADP. Functionally, major role in the synthesis of nucleoside triphosphates other than ATP. The ATP gamma phosphate is transferred to the NDP beta phosphate via a ping-pong mechanism, using a phosphorylated active-site intermediate. This chain is Nucleoside diphosphate kinase, found in Cellvibrio japonicus (strain Ueda107) (Pseudomonas fluorescens subsp. cellulosa).